The chain runs to 166 residues: Large ribosomal subunit protein uL10 (166 aa).

Belongs to the universal ribosomal protein uL10 family. In terms of assembly, part of the ribosomal stalk of the 50S ribosomal subunit. The N-terminus interacts with L11 and the large rRNA to form the base of the stalk. The C-terminus forms an elongated spine to which L12 dimers bind in a sequential fashion forming a multimeric L10(L12)X complex.

In terms of biological role, forms part of the ribosomal stalk, playing a central role in the interaction of the ribosome with GTP-bound translation factors. The protein is Large ribosomal subunit protein uL10 of Pelagibacter ubique (strain HTCC1062).